Consider the following 403-residue polypeptide: Sulfate adenylyltransferase (403 aa).

This sequence belongs to the sulfate adenylyltransferase family.

The enzyme catalyses sulfate + ATP + H(+) = adenosine 5'-phosphosulfate + diphosphate. It functions in the pathway sulfur metabolism; hydrogen sulfide biosynthesis; sulfite from sulfate: step 1/3. This is Sulfate adenylyltransferase from Pelodictyon phaeoclathratiforme (strain DSM 5477 / BU-1).